The primary structure comprises 440 residues: Tyrosine--tRNA ligase (440 aa).

Y46 contacts L-tyrosine. Residues 51–60 (PTAASLHIGN) carry the 'HIGH' region motif. Positions 181 and 185 each coordinate L-tyrosine. The 'KMSKS' region signature appears at 241-245 (KFGKS). K244 is a binding site for ATP. In terms of domain architecture, S4 RNA-binding spans 373–439 (DRVIDAAQAA…GKKALGAVEN (67 aa)).

Belongs to the class-I aminoacyl-tRNA synthetase family. TyrS type 1 subfamily. Homodimer.

It localises to the cytoplasm. The enzyme catalyses tRNA(Tyr) + L-tyrosine + ATP = L-tyrosyl-tRNA(Tyr) + AMP + diphosphate + H(+). Catalyzes the attachment of tyrosine to tRNA(Tyr) in a two-step reaction: tyrosine is first activated by ATP to form Tyr-AMP and then transferred to the acceptor end of tRNA(Tyr). The sequence is that of Tyrosine--tRNA ligase from Bifidobacterium longum subsp. infantis (strain ATCC 15697 / DSM 20088 / JCM 1222 / NCTC 11817 / S12).